We begin with the raw amino-acid sequence, 158 residues long: Glutathione peroxidase homolog BsaA (158 aa).

Thr-36 is an active-site residue.

The protein belongs to the glutathione peroxidase family.

The polypeptide is Glutathione peroxidase homolog BsaA (bsaA) (Staphylococcus epidermidis (strain ATCC 35984 / DSM 28319 / BCRC 17069 / CCUG 31568 / BM 3577 / RP62A)).